A 906-amino-acid chain; its full sequence is Patched domain-containing protein 3 (906 aa).

Residues 1 to 70 (MISSKVAPGE…LGQEAPPPRR (70 aa)) are disordered. N-linked (GlcNAc...) asparagine glycosylation is found at N148 and N235. 11 helical membrane passes run 338–358 (TVIP…VVSC), 370–390 (VAVF…GLML), 392–412 (LGVP…GVGV), 442–462 (VAVS…TGIT), 476–496 (GTTL…VMAL), 559–579 (FIVV…CFQV), 760–780 (VMIA…HPVC), 782–802 (LWVT…MAFW), 814–834 (LVIC…AFVS), 848–868 (LYLL…GVCV), and 883–903 (IMFL…PVFL). Residues 339 to 496 (VIPLFHLAYI…ITCFGAVMAL (158 aa)) enclose the SSD domain.

It belongs to the patched family. As to expression, expressed in germ cells of the testis (at protein level).

It localises to the cell projection. It is found in the cilium. The protein localises to the flagellum membrane. Its subcellular location is the endoplasmic reticulum membrane. In terms of biological role, may play a role in sperm development or sperm function. However, does not appear to have an essential role in spermatogenesis or male fertility. This is Patched domain-containing protein 3 (Ptchd3) from Mus musculus (Mouse).